We begin with the raw amino-acid sequence, 237 residues long: tRNA(His) guanylyltransferase (237 aa).

3 residues coordinate Mg(2+): Asp29, Gly30, and Asp77. Residues 29–34 and 76–77 contribute to the GTP site; these read DGKHFH and SD.

This sequence belongs to the tRNA(His) guanylyltransferase family. Requires Mg(2+) as cofactor.

The enzyme catalyses a 5'-end ribonucleotide-tRNA(His) + GTP + ATP + H2O = a 5'-end phospho-guanosine-ribonucleotide-tRNA(His) + AMP + 2 diphosphate + H(+). Adds a GMP to the 5'-end of tRNA(His) after transcription and RNase P cleavage. This Eremothecium gossypii (strain ATCC 10895 / CBS 109.51 / FGSC 9923 / NRRL Y-1056) (Yeast) protein is tRNA(His) guanylyltransferase (THG1).